The chain runs to 246 residues: Probable transcriptional regulatory protein YebC (246 aa).

The interval 1 to 20 is disordered; sequence MAGHSKWANTRHRKAAQDAK.

This sequence belongs to the TACO1 family.

Its subcellular location is the cytoplasm. This is Probable transcriptional regulatory protein YebC from Shigella dysenteriae serotype 1 (strain Sd197).